A 72-amino-acid chain; its full sequence is Large ribosomal subunit protein uL29 (72 aa).

Belongs to the universal ribosomal protein uL29 family.

This is Large ribosomal subunit protein uL29 from Caldicellulosiruptor saccharolyticus (strain ATCC 43494 / DSM 8903 / Tp8T 6331).